The following is a 219-amino-acid chain: Ras-related protein Rab-3B (219 aa).

N-acetylalanine is present on alanine 2. GTP is bound by residues serine 31, serine 32, valine 33, glycine 34, lysine 35, threonine 36, serine 37, proline 49, and serine 53. Threonine 36 serves as a coordination point for Mg(2+). Positions 45 to 58 (DTFTPAFVSTVGID) match the Switch 1 motif. Mg(2+) is bound by residues threonine 54 and aspartate 77. Positions 78–96 (TAGQERYRTITTAYYRGAM) match the Switch 2 motif. Glycine 80 serves as a coordination point for GTP. Threonine 86 is modified (phosphothreonine). Residues asparagine 135, lysine 136, aspartate 138, alanine 166, and lysine 167 each contribute to the GTP site. Residues serine 188 and serine 190 each carry the phosphoserine modification. Residues cysteine 217 and cysteine 219 are each lipidated (S-geranylgeranyl cysteine). A Cysteine methyl ester modification is found at cysteine 219.

Belongs to the small GTPase superfamily. Rab family. Interacts with RPH3A and RPH3AL. Interacts with RIMS1. Interacts with RIMS2. The GTP-bound form interacts with GAS8/DRC4 (via coiled-coil domains). Interacts with GDI2, and CHM; phosphorylation at Thr-86 disrupts these interactions. Interacts with MADD (via uDENN domain); the GTP-bound form is preferred for interaction. The cofactor is Mg(2+). In terms of processing, phosphorylation of Thr-86 in the switch II region by LRRK2 prevents the association of RAB regulatory proteins, including CHM and RAB GDP dissociation inhibitor GDI2.

The protein localises to the cell membrane. It localises to the golgi apparatus. The enzyme catalyses GTP + H2O = GDP + phosphate + H(+). Its activity is regulated as follows. Regulated by guanine nucleotide exchange factors (GEFs) which promote the exchange of bound GDP for free GTP. Regulated by GTPase activating proteins (GAPs) which increase the GTP hydrolysis activity. Inhibited by GDP dissociation inhibitors (GDIs) which prevent Rab-GDP dissociation. Functionally, the small GTPases Rab are key regulators of intracellular membrane trafficking, from the formation of transport vesicles to their fusion with membranes. Rabs cycle between an inactive GDP-bound form and an active GTP-bound form that is able to recruit to membranes different sets of downstream effectors directly responsible for vesicle formation, movement, tethering and fusion. In Rattus norvegicus (Rat), this protein is Ras-related protein Rab-3B.